Here is a 161-residue protein sequence, read N- to C-terminus: Ribonuclease H (161 aa).

Residues 11-152 (GPRPVVIHTD…ADQLARDGLT (142 aa)) form the RNase H type-1 domain. Positions 20, 58, 80, and 144 each coordinate Mg(2+). The tract at residues 137-161 (HDENERADQLARDGLTENRMKSRIG) is disordered.

It belongs to the RNase H family. In terms of assembly, monomer. The cofactor is Mg(2+).

Its subcellular location is the cytoplasm. It catalyses the reaction Endonucleolytic cleavage to 5'-phosphomonoester.. Endonuclease that specifically degrades the RNA of RNA-DNA hybrids. The protein is Ribonuclease H of Rhodopseudomonas palustris (strain HaA2).